The following is a 212-amino-acid chain: MFTGIVRGLGKVVKILKEKKISQWEVETSNELVKNLMLGASISCNGCCLTVRNIFRTIFCVDIVEETLRSTSLNTIIVGQYINLERSIKFGEEVGGHLVSGHIITTGVVSDKKELFSNQELWISLSASFFIKYFFYKGFVCVDGISLTIGSIKNNAFCVFLIPETILRTTIGQKIIGDVVNIEIDFYTQITVDSVERLLKVHPSKFINCIDI.

2 Lumazine-binding repeats span residues 1–97 and 98–195; these read MFTG…VGGH and LVSG…VDSV. 2,4-dihydroxypteridine-binding positions include 4-6, 48-50, 62-67, 101-103, Lys-137, 146-148, and 160-165; these read GIV, CLT, DIVEET, GHI, SLT, and FLIPET.

As to quaternary structure, homotrimer.

The enzyme catalyses 2 6,7-dimethyl-8-(1-D-ribityl)lumazine + H(+) = 5-amino-6-(D-ribitylamino)uracil + riboflavin. It participates in cofactor biosynthesis; riboflavin biosynthesis; riboflavin from 2-hydroxy-3-oxobutyl phosphate and 5-amino-6-(D-ribitylamino)uracil: step 2/2. Catalyzes the dismutation of two molecules of 6,7-dimethyl-8-ribityllumazine, resulting in the formation of riboflavin and 5-amino-6-(D-ribitylamino)uracil. This chain is Riboflavin synthase (ribE), found in Buchnera aphidicola subsp. Baizongia pistaciae (strain Bp).